The sequence spans 86 residues: ICP47 protein (86 aa).

The interval 2-35 is active domain; it reads SWALKTTDMFLDSSRCTHRTYGDVCAEIHKRERE. The segment at 33-86 is disordered; that stretch reads EREDREAARTAVTDPELPLLCPPDVRSDPASRNPTQQTRGCARSNERQDRVLAP. The segment covering 62-71 has biased composition (polar residues); it reads ASRNPTQQTR. The segment covering 76–86 has biased composition (basic and acidic residues); the sequence is SNERQDRVLAP.

This sequence belongs to the herpesviridae US12 family. Interacts with host TAP1 and TAP2; these interactions inhibit the loading of peptides onto MHC class I molecules.

The protein resides in the host cytoplasm. The protein localises to the host nucleus. In terms of biological role, plays a role in the inhibition of host immune response. Binds specifically to transporters associated with antigen processing (TAP), thereby blocking peptide-binding and translocation by TAP as well as subsequent loading of peptides onto MHC class I molecules. Empty MHC I molecules are retained in the endoplasmic reticulum and ultimately directed to proteasomal degradation. In consequence, infected cells are masked for immune recognition by cytotoxic T-lymphocytes. The sequence is that of ICP47 protein (US12) from Human herpesvirus 2 (strain HG52) (HHV-2).